Reading from the N-terminus, the 1876-residue chain is MTGSISGEADLRHWLIDYLVTNIGCTPDEVDPDLSLADLGVSSRDAVVLSGELSELLGRTVSPIDFWEHPTINALAAYLAAPEPSPDSDAAVKRGARNSLDEPIAVVGMGCRFPGGISCPEALWDFLCERRSSISQVPPQRWQPFEGGPPEVAAALARTTRWGSFLPDIDAFDAEFFEISPSEADKMDPQQRLLLEVAWEALEHAGIPPGTLRRSATGVFAGACLSEYGAMASADLSQVDGWSNSGGAMSIIANRLSYFLDLRGPSVAVDTACSSSLVAIHLACQSLRTQDCHLAIAAGVNLLLSPAVFRGFDQVGALSPTGQCRAFDATADGFVRGEGAGVVVLKRLTDAQRDGDRVLAVICGSAVNQDGRSNGLMAPNPAAQMAVLRAAYTNAGMQPSEVDYVEAHGTGTLLGDPIEARALGTVLGRGRPEDSPLLIGSVKTNLGHTEAAAGIAGFIKTVLAVQHGQIPPNQHFETANPHIPFTDLRMKVVDTQTEWPATGHPRRAGVSSFGFGGTNAHVVIEQGQEVRPAPGQGLSPAVSTLVVAGKTMQRVSATAGMLADWMEGPGADVALADVAHTLNHHRSRQPKFGTVVARDRTQAIAGLRALAAGQHAPGVVNPAEGSPGPGTVFVYSGRGSQWAGMGRQLLADEPAFAAAVAELEPVFVEQAGFSLHDVLANGEELVGIEQIQLGLIGMQLALTELWCSYGVRPDLVIGHSMGEVAAAVVAGALTPAEGLRVTATRSRLMAPLSGQGGMALLELDAPTTEALIADFPQVTLGIYNSPRQTVIAGPTEQIDELIARVRAQNRFASRVNIEVAPHNPAMDALQPAMRSELADLTPRTPTIGIISTTYADLHTQPVFDAEHWATNMRNPVHFQQAIASAGSGADGAYHTFIEISAHPLLTQAIIDTLHSAQPGARYTSLGTLQRDTDDVVTFRTNLNKAHTIHPPHTPHPPEPHPPIPTTPWQHTRHWITTKYPAGSVGSAPRAGTLLGQHTTVATVSASPPSHLWQARLAPDAKPYQGGHRFHQVEVVPASVVLHTILSAATELGYSALSEVRFEQPIFADRPRLIQVVADNRAISLASSPAAGTPSDRWTRHVTAQLSSSPSDSASSLNEHHRANGQPPERAHRDLIPDLAELLAMRGIDGLPFSWTVASWTQHSSNLTVAIDLPEALPEGSTGPLLDAAVHLAALSDVADSRLYVPASIEQISLGDVVTGPRSSVTLNRTAHDDDGITVDVTVAAHGEVPSLSMRSLRYRALDFGLDVGRAQPPASTGPVEAYCDATNFVHTIDWQPQTVPDATHPGAEQVTHPGPVAIIGDDSAALCETLEGAGYQPAVMSDGVSQARYVVYVADSDPAGADETDVDFAVRICTEITGLVRTLAERDADKPAALWILTRGVHESVAPSALRQSFLWGLAGVIAAEHPELWGGLVDLAINDDLGEFGPALAELLAKPSKSILVRRDGVVLAPALAPVRGEPARKSLQCRPDAAYLITGGLGALGLLMADWLADRGAHRLVLTGRTPLPPRRDWQLDTLDTELRRRIDAIRALEMRGVTVEAVAADVGCREDVQALLAARDRDGAAPIRGIIHAAGITNDQLVTSMTGDAVRQVMWPKIGGSQVLHDAFPPGSVDFFYLTASAAGIFGIPGQGSYAAANSYLDALARARRQQGCHTMSLDWVAWRGLGLAADAQLVSEELARMGSRDITPSEAFTAWEFVDGYDVAQAVVVPMPAPAGADGSGANAYLLPARNWSVMAATEVRSELEQGLRRIIAAELRVPEKELDTDRPFAELGLNSLMAMAIRREAEQFVGIELSATMLFNHPTVKSLASYLAKRVAPHDVSQDNQISALSSSAGSVLDSLFDRIESAPPEAERSV.

The 75-residue stretch at 9-83 folds into the Carrier 1 domain; it reads ADLRHWLIDY…ALAAYLAAPE (75 aa). Ser43 carries the post-translational modification O-(pantetheine 4'-phosphoryl)serine. Residues 101–526 enclose the Ketosynthase family 3 (KS3) domain; the sequence is DEPIAVVGMG…GTNAHVVIEQ (426 aa). Catalysis depends on for beta-ketoacyl synthase activity residues Cys273, His408, and His448. The interval 626-950 is acyltransferase; sequence SPGPGTVFVY…NLNKAHTIHP (325 aa). Ser720 functions as the For malonyltransferase activity in the catalytic mechanism. Residues 997 to 1112 form an N-terminal hotdog fold region; it reads HTTVATVSAS…AQLSSSPSDS (116 aa). The 271-residue stretch at 997–1267 folds into the PKS/mFAS DH domain; it reads HTTVATVSAS…YRALDFGLDV (271 aa). His1027 serves as the catalytic Proton acceptor; for dehydratase activity. The segment at 1102-1130 is disordered; the sequence is TAQLSSSPSDSASSLNEHHRANGQPPERA. The segment covering 1106–1115 has biased composition (low complexity); the sequence is SSSPSDSASS. Residues 1130 to 1267 are C-terminal hotdog fold; the sequence is AHRDLIPDLA…YRALDFGLDV (138 aa). The active-site Proton donor; for dehydratase activity is the Asp1186. 1491–1551 serves as a coordination point for NADP(+); sequence AAYLITGGLG…RRRIDAIRAL (61 aa). The interval 1491 to 1728 is beta-ketoacyl reductase; that stretch reads AAYLITGGLG…DGYDVAQAVV (238 aa). A Carrier 2 domain is found at 1759–1836; that stretch reads EVRSELEQGL…SLASYLAKRV (78 aa). The residue at position 1796 (Ser1796) is an O-(pantetheine 4'-phosphoryl)serine.

NADP(+) serves as cofactor. The cofactor is pantetheine 4'-phosphate.

The catalysed reaction is icosanoyl-[(phenol)carboxyphthiodiolenone synthase] + 2 (S)-methylmalonyl-CoA + 3 malonyl-CoA + 5 NADPH + 10 H(+) = C32-carboxyphthiodiolenone-[(phenol)carboxyphthiodiolenone synthase] + 5 CO2 + 5 NADP(+) + 5 CoA + 2 H2O. It carries out the reaction docosanoyl-[(phenol)carboxyphthiodiolenone synthase] + 2 (S)-methylmalonyl-CoA + 3 malonyl-CoA + 5 NADPH + 10 H(+) = C34-carboxyphthiodiolenone-[(phenol)carboxyphthiodiolenone synthase] + 5 CO2 + 5 NADP(+) + 5 CoA + 2 H2O. The enzyme catalyses 17-(4-hydroxyphenyl)heptadecanoyl-[(phenol)carboxyphthiodiolenone synthase] + 2 (S)-methylmalonyl-CoA + 3 malonyl-CoA + 5 NADPH + 10 H(+) = C35-(phenol)carboxyphthiodiolenone-[(phenol)carboxyphthiodiolenone synthase] + 5 CO2 + 5 NADP(+) + 5 CoA + 2 H2O. It catalyses the reaction 19-(4-hydroxyphenyl)nonadecanoyl-[(phenol)carboxyphthiodiolenone synthase] + 2 (S)-methylmalonyl-CoA + 3 malonyl-CoA + 5 NADPH + 10 H(+) = C37-(phenol)carboxyphthiodiolenone-[(phenol)carboxyphthiodiolenone synthase] + 5 CO2 + 5 NADP(+) + 5 CoA + 2 H2O. Its pathway is lipid metabolism; fatty acid biosynthesis. Its function is as follows. Part of the PpsABCDE complex involved in the biosynthesis of the lipid core common to phthiocerols and phenolphthiocerols by successive additions of malonyl-CoA or methylmalonyl-CoA extender units. PpsA can accept as substrate the activated forms of either icosanoyl (C20), docosanoyl (C22) or lignoceroyl (C24) groups from FadD26, or a (4-hydroxyphenyl)-C17 or (4-hydroxyphenyl)-C19 fatty acyl from FadD29. PpsA initiates the biosynthesis and extends its substrate using a malonyl-CoA extender unit. The PpsB and PpsC proteins add the second and third malonyl-CoA extender units. PpsD adds an (R)-methylmalonyl unit and PpsE adds a second (R)-methylmalonyl unit. The incorporation of the methylmalonyl units results in formation of two branched methyl groups in the elongated product. The protein is Phenolphthiocerol/phthiocerol polyketide synthase subunit A (ppsA) of Mycobacterium tuberculosis (strain CDC 1551 / Oshkosh).